Consider the following 248-residue polypeptide: 3-deoxy-manno-octulosonate cytidylyltransferase (248 aa).

The protein belongs to the KdsB family.

The protein localises to the cytoplasm. It catalyses the reaction 3-deoxy-alpha-D-manno-oct-2-ulosonate + CTP = CMP-3-deoxy-beta-D-manno-octulosonate + diphosphate. Its pathway is nucleotide-sugar biosynthesis; CMP-3-deoxy-D-manno-octulosonate biosynthesis; CMP-3-deoxy-D-manno-octulosonate from 3-deoxy-D-manno-octulosonate and CTP: step 1/1. It participates in bacterial outer membrane biogenesis; lipopolysaccharide biosynthesis. Its function is as follows. Activates KDO (a required 8-carbon sugar) for incorporation into bacterial lipopolysaccharide in Gram-negative bacteria. In Salmonella enteritidis PT4 (strain P125109), this protein is 3-deoxy-manno-octulosonate cytidylyltransferase.